An 835-amino-acid chain; its full sequence is Prickle-like protein 1-A (835 aa).

Residues 14–122 (FGCQRSSTSD…NIKMLSRAVM (109 aa)) form the PET domain. LIM zinc-binding domains follow at residues 124-188 (ATCE…ELLK), 189-249 (PRCS…HYAE), and 250-313 (YCES…EDVH). Disordered stretches follow at residues 312 to 346 (VHAS…ADQC), 426 to 455 (LFQQ…QRNN), 603 to 706 (CQEK…RKRS), and 769 to 835 (CSSS…CIIS). 3 stretches are compositionally biased toward basic and acidic residues: residues 432–453 (EDNR…DLQR), 603–614 (CQEKPPPEEKPM), and 646–655 (EIRRPPMSER). Basic residues-rich tracts occupy residues 669–683 (RPHH…KSRK) and 819–835 (SKSK…CIIS). The residue at position 832 (Cys-832) is a Cysteine methyl ester. A lipid anchor (S-farnesyl cysteine) is attached at Cys-832. Positions 833–835 (IIS) are cleaved as a propeptide — removed in mature form.

The protein belongs to the prickle / espinas / testin family. In terms of assembly, interacts with dvl2/dsh and mapk8/jnk1. In terms of tissue distribution, expressed in the dorsal marginal zone of early gastrulae (stage 10). As gastrulation proceeds, expression expands to include the lateral and ventral marginal zones, excluding the few rows of cells above the blastopore lip. Expression moves dorsally with gastrulation cell movements, and by the end of gastrulation expression is seen in dorsal mesoderm and posterior but not anterior neural ectoderm. Expression becomes down-regulated in mesoderm but remains strong in posterior ectoderm through the neurula stages. During tailbud stages, expressed in the pronephric duct, tailbud, tailtip and forming somites. In the most posterior regions, expressed in notochord and in the floorplate of the neural tube with weak expression in the roofplate. At stage 30, expressed in a complex pattern in the head including strong expression in the lens and otic vesicle.

Its subcellular location is the cell membrane. Its function is as follows. Acts in a planar cell polarity (PCP) complex; polarization along the apical/basal axis of epithelial cells. Regulates the polarized assembly of fibronectrin on the surface of the mesoderm during gastrulation. Essential for gastrulation cell movements, cooperating with dvl2/dsh to activate jnk. Acts together with tes to control axial elongation. The sequence is that of Prickle-like protein 1-A (prickle1-a) from Xenopus laevis (African clawed frog).